A 381-amino-acid polypeptide reads, in one-letter code: Probable glucuronosyltransferase Os04g0103100 (381 aa).

The Cytoplasmic segment spans residues 1 to 69; the sequence is MASIRRPHSP…HTSFRRPLPR (69 aa). Residues 21–50 are disordered; it reads HLGPFASSSPPSSPLRHSSSSSSPRSAAHH. The span at 26–46 shows a compositional bias: low complexity; that stretch reads ASSSPPSSPLRHSSSSSSPRS. Residues 70–90 form a helical; Signal-anchor for type II membrane protein membrane-spanning segment; the sequence is FAAFFLLGSFLGLLHFLSHLP. Residues 91-381 lie on the Lumenal side of the membrane; the sequence is RPLGPIPNPN…TDLDVIIPLK (291 aa). The segment at 96-122 is disordered; the sequence is IPNPNSHHRHRDPFPILQHPHPPSTPH. N-linked (GlcNAc...) asparagine glycans are attached at residues asparagine 194 and asparagine 296.

Belongs to the glycosyltransferase 43 family.

It is found in the golgi apparatus membrane. Its function is as follows. Involved in the synthesis of glucuronoxylan hemicellulose in secondary cell walls. This Oryza sativa subsp. japonica (Rice) protein is Probable glucuronosyltransferase Os04g0103100.